Consider the following 122-residue polypeptide: Large ribosomal subunit protein uL14 (122 aa).

Belongs to the universal ribosomal protein uL14 family. As to quaternary structure, part of the 50S ribosomal subunit. Forms a cluster with proteins L3 and L19. In the 70S ribosome, L14 and L19 interact and together make contacts with the 16S rRNA in bridges B5 and B8.

Binds to 23S rRNA. Forms part of two intersubunit bridges in the 70S ribosome. The protein is Large ribosomal subunit protein uL14 of Pseudomonas aeruginosa (strain LESB58).